The sequence spans 567 residues: Urease subunit alpha 1 (567 aa).

A Urease domain is found at 128–567 (GAVDTHVHYI…LPLAQLYHLF (440 aa)). Ni(2+) contacts are provided by H133, H135, and K216. K216 carries the N6-carboxylysine modification. H218 serves as a coordination point for substrate. H245 and H271 together coordinate Ni(2+). H319 functions as the Proton donor in the catalytic mechanism. D359 is a binding site for Ni(2+).

The protein belongs to the metallo-dependent hydrolases superfamily. Urease alpha subunit family. In terms of assembly, heterotrimer of UreA (gamma), UreB (beta) and UreC (alpha) subunits. Three heterotrimers associate to form the active enzyme. The cofactor is Ni cation. Post-translationally, carboxylation allows a single lysine to coordinate two nickel ions.

The protein localises to the cytoplasm. It catalyses the reaction urea + 2 H2O + H(+) = hydrogencarbonate + 2 NH4(+). Its pathway is nitrogen metabolism; urea degradation; CO(2) and NH(3) from urea (urease route): step 1/1. The chain is Urease subunit alpha 1 from Psychrobacter cryohalolentis (strain ATCC BAA-1226 / DSM 17306 / VKM B-2378 / K5).